Reading from the N-terminus, the 161-residue chain is uncharacterized protein (161 aa).

The interval 126–161 (TPSNCGESSTSSGQSSGDESNCSLRTHGVYTRGEQH) is disordered. Residues 128–148 (SNCGESSTSSGQSSGDESNCS) are compositionally biased toward low complexity.

It belongs to the herpesviridae US1 family.

This is an uncharacterized protein from Human cytomegalovirus (strain AD169) (HHV-5).